The chain runs to 327 residues: Fructose-1,6-bisphosphatase class 1 (327 aa).

Positions 84, 103, 105, and 106 each coordinate Mg(2+). Residues 106-109, Asn-198, and Lys-264 contribute to the substrate site; that span reads DGSS. Glu-270 serves as a coordination point for Mg(2+).

This sequence belongs to the FBPase class 1 family. As to quaternary structure, homotetramer. The cofactor is Mg(2+).

The protein localises to the cytoplasm. It carries out the reaction beta-D-fructose 1,6-bisphosphate + H2O = beta-D-fructose 6-phosphate + phosphate. It functions in the pathway carbohydrate biosynthesis; gluconeogenesis. This chain is Fructose-1,6-bisphosphatase class 1, found in Psychrobacter cryohalolentis (strain ATCC BAA-1226 / DSM 17306 / VKM B-2378 / K5).